The sequence spans 1755 residues: MESQQLSQHSHISHGSACASVTSKEVHTNQDPLDVSASKTEECEKASTKANSQQTTTPASSAVPENPHHASPQTAQSHSPQNGPYPQQCMMTQNQANPSGWSFYGHPSMIPYTPYQMSPMYFPPGPQSQFPQYPSSVGTPLSTPSPESGNTFTDSSSADSDMTSTKKYVRPPPMLTSPNDFPNWVKTYIKFLQNSNLGGIIPTVNGKPVRQITDDELTFLYNTFQIFAPSQFLPTWVKDILSVDYTDIMKILSKSIEKMQSDTQEANDIVTLANLQYNGSTPADAFETKVTNIIDRLNNNGIHINNKVACQLIMRGLSGEYKFLRYTRHRHLNMTVAELFLDIHAIYEEQQGSRNSKPNYRRNLSDEKNDSRSYTNTTKPKVIARNPQKTNNSKSKTARAHNVSTSNNSPSTDNDSISKSTTEPIQLNNKHDLHLGQELTESTVNHTNHSDDELPGHLLLDSGASRTLIRSAHHIHSASSNPDINVVDAQKRNIPINAIGDLQFHFQDNTKTSIKVLHTPNIAYDLLSLNELAAVDITACFTKNVLERSDGTVLAPIVQYGDFYWVSKRYLLPSNISVPTINNVHTSESTRKYPYPFIHRMLAHANAQTIRYSLKNNTITYFNESDVDWSSAIDYQCPDCLIGKSTKHRHIKGSRLKYQNSYEPFQYLHTDIFGPVHNLPKSAPSYFISFTDETTKFRWVYPLHDRREDSILDVFTTILAFIKNQFQASVLVIQMDRGSEYTNRTLHKFLEKNGITPCYTTTADSRAHGVAERLNRTLLDDCRTQLQCSGLPNHLWFSAIEFSTIVRNSLASPKSKKSARQHAGLAGLDISTLLPFGQPVIVNDHNPNSKIHPRGIPGYALHPSRNSYGYIIYLPSLKKTVDTTNYVILQGKESRLDQFNYDALTFDEDLNRLTASYHSFIASNEIQESNDLNIESDHDFQSDIELHPEQPRNVLSKAVSPTDSTPPSTHTEDSKRVSKTNIRAPREVDPNISESNILPSKKRSSTPQISNIESTGSGGMHKLNVPLLAPMSQSNTHESSHASKSKDFRHSDSYSENETNHTNVPISSTGGTNNKTVPQISDQETEKRIIHRSPSIDASPPENNSSHNIVPIKTPTTVSEQNTEESIIADLPLPDLPPESPTEFPDPFKELPPINSRQTNSSLGGIGDSNAYTTINSKKRSLEDNETEIKVSRDTWNTKNMRSLEPPRSKKRIHLIAAVKAVKSIKPIRTTLRYDEAITYNKDIKEKEKYIEAYHKEVNQLLKMKTWDTDEYYDRKEIDPKRVINSMFIFNKKRDGTHKARFVARGDIQHPDTYDSGMQSNTVHHYALMTSLSLALDNNYYITQLDISSAYLYADIKEELYIRPPPHLGMNDKLIRLKKSLYGLKQSGANWYETIKSYLIQQCGMEEVRGWSCVFKNSQVTICLFVDDMVLFSKNLNSNKRIIDKLKMQYDTKIINLGESDEEIQYDILGLEIKYQRGKYMKLGMENSLTEKIPKLNVPLNPKGRKLSAPGQPGLYIDQQELELEEDDYKMKVHEMQKLIGLASYVGYKFRFDLLYYINTLAQHILFPSKQVLDMTYELIQFIWNTRDKQLIWHKSKPVKPTNKLVVISDASYGNQPYYKSQIGNIYLLNGKVIGGKSTKASLTCTSTTEAEIHAISESVPLLNNLSYLIQELDKKPITKGLLTDSKSTISIIISNNEEKFRNRFFGTKAMRLRDEVSGNHLHVCYIETKKNIADVMTKPLPIKTFKLLTNKWIH.

Residues 1–16 are compositionally biased toward low complexity; it reads MESQQLSQHSHISHGS. Disordered stretches follow at residues 1-93, 126-173, and 352-421; these read MESQ…MMTQ, PQSQ…RPPP, and GSRN…SKST. Composition is skewed to polar residues over residues 48–60, 71–93, and 127–152; these read TKANSQQTTTPAS, SPQTAQSHSPQNGPYPQQCMMTQ, and QSQFPQYPSSVGTPLSTPSPESGNTF. A compositionally biased stretch (low complexity) spans 153 to 165; sequence TDSSSADSDMTST. Positions 299–401 are RNA-binding; that stretch reads NNGIHINNKV…NSKSKTARAH (103 aa). Over residues 402–418 the composition is skewed to low complexity; that stretch reads NVSTSNNSPSTDNDSIS. At Ser416 the chain carries Phosphoserine. The active-site For protease activity; shared with dimeric partner is Asp461. The segment at 583 to 640 is integrase-type zinc finger-like; the sequence is NVHTSESTRKYPYPFIHRMLAHANAQTIRYSLKNNTITYFNESDVDWSSAIDYQCPDC. The 176-residue stretch at 660 to 835 folds into the Integrase catalytic domain; it reads NSYEPFQYLH…AGLDISTLLP (176 aa). Mg(2+)-binding residues include Asp671 and Asp736. 3 disordered regions span residues 956 to 1087, 1092 to 1111, and 1130 to 1187; these read SKAV…ETEK, RSPSIDASPPENNSSHNIVP, and DLPL…DNET. Residues 960–969 are compositionally biased toward low complexity; it reads SPTDSTPPST. Positions 1005 to 1015 are enriched in polar residues; it reads STPQISNIEST. Over residues 1038–1053 the composition is skewed to basic and acidic residues; the sequence is ESSHASKSKDFRHSDS. 2 stretches are compositionally biased toward polar residues: residues 1054–1082 and 1101–1111; these read YSENETNHTNVPISSTGGTNNKTVPQISD and PENNSSHNIVP. Residues 1178–1212 carry the Bipartite nuclear localization signal motif; that stretch reads KKRSLEDNETEIKVSRDTWNTKNMRSLEPPRSKKR. Residues 1338–1476 form the Reverse transcriptase Ty1/copia-type domain; it reads NNYYITQLDI…DILGLEIKYQ (139 aa). Asp1346, Asp1427, Asp1428, Asp1610, Glu1652, and Asp1685 together coordinate Mg(2+). Residues 1610–1752 form the RNase H Ty1/copia-type domain; the sequence is DASYGNQPYY…IKTFKLLTNK (143 aa).

The capsid protein forms a homotrimer, from which the VLPs are assembled. The protease is a homodimer, whose active site consists of two apposed aspartic acid residues. In terms of processing, initially, virus-like particles (VLPs) are composed of the structural unprocessed proteins Gag and Gag-Pol, and also contain the host initiator methionine tRNA (tRNA(i)-Met) which serves as a primer for minus-strand DNA synthesis, and a dimer of genomic Ty RNA. Processing of the polyproteins occurs within the particle and proceeds by an ordered pathway, called maturation. First, the protease (PR) is released by autocatalytic cleavage of the Gag-Pol polyprotein yielding capsid protein p45 and a Pol-p154 precursor protein. This cleavage is a prerequisite for subsequent processing of Pol-p154 at the remaining sites to release the mature structural and catalytic proteins. Maturation takes place prior to the RT reaction and is required to produce transposition-competent VLPs.

The protein resides in the cytoplasm. Its subcellular location is the nucleus. The enzyme catalyses DNA(n) + a 2'-deoxyribonucleoside 5'-triphosphate = DNA(n+1) + diphosphate. It carries out the reaction Endonucleolytic cleavage to 5'-phosphomonoester.. In terms of biological role, capsid protein (CA) is the structural component of the virus-like particle (VLP), forming the shell that encapsulates the retrotransposons dimeric RNA genome. The particles are assembled from trimer-clustered units and there are holes in the capsid shells that allow for the diffusion of macromolecules. CA also has nucleocapsid-like chaperone activity, promoting primer tRNA(i)-Met annealing to the multipartite primer-binding site (PBS), dimerization of Ty1 RNA and initiation of reverse transcription. The aspartyl protease (PR) mediates the proteolytic cleavages of the Gag and Gag-Pol polyproteins after assembly of the VLP. Functionally, reverse transcriptase/ribonuclease H (RT) is a multifunctional enzyme that catalyzes the conversion of the retro-elements RNA genome into dsDNA within the VLP. The enzyme displays a DNA polymerase activity that can copy either DNA or RNA templates, and a ribonuclease H (RNase H) activity that cleaves the RNA strand of RNA-DNA heteroduplexes during plus-strand synthesis and hydrolyzes RNA primers. The conversion leads to a linear dsDNA copy of the retrotransposon that includes long terminal repeats (LTRs) at both ends. Its function is as follows. Integrase (IN) targets the VLP to the nucleus, where a subparticle preintegration complex (PIC) containing at least integrase and the newly synthesized dsDNA copy of the retrotransposon must transit the nuclear membrane. Once in the nucleus, integrase performs the integration of the dsDNA into the host genome. This Saccharomyces cerevisiae (strain ATCC 204508 / S288c) (Baker's yeast) protein is Transposon Ty1-GR1 Gag-Pol polyprotein (TY1B-GR1).